A 309-amino-acid chain; its full sequence is Tagatose-6-phosphate kinase (309 aa).

The protein belongs to the carbohydrate kinase PfkB family. LacC subfamily.

It carries out the reaction D-tagatofuranose 6-phosphate + ATP = D-tagatofuranose 1,6-bisphosphate + ADP + H(+). Its pathway is carbohydrate metabolism; D-tagatose 6-phosphate degradation; D-glyceraldehyde 3-phosphate and glycerone phosphate from D-tagatose 6-phosphate: step 1/2. In Streptococcus pyogenes serotype M1, this protein is Tagatose-6-phosphate kinase.